A 121-amino-acid chain; its full sequence is Large ribosomal subunit protein eL18 (121 aa).

It belongs to the eukaryotic ribosomal protein eL18 family.

This Methanocaldococcus jannaschii (strain ATCC 43067 / DSM 2661 / JAL-1 / JCM 10045 / NBRC 100440) (Methanococcus jannaschii) protein is Large ribosomal subunit protein eL18.